A 127-amino-acid chain; its full sequence is Large ribosomal subunit protein bL12 (127 aa).

It belongs to the bacterial ribosomal protein bL12 family. As to quaternary structure, homodimer. Part of the ribosomal stalk of the 50S ribosomal subunit. Forms a multimeric L10(L12)X complex, where L10 forms an elongated spine to which 2 to 4 L12 dimers bind in a sequential fashion. Binds GTP-bound translation factors.

Functionally, forms part of the ribosomal stalk which helps the ribosome interact with GTP-bound translation factors. Is thus essential for accurate translation. This Clavibacter michiganensis subsp. michiganensis (strain NCPPB 382) protein is Large ribosomal subunit protein bL12.